The sequence spans 78 residues: Large ribosomal subunit protein eL20 (78 aa).

The protein belongs to the eukaryotic ribosomal protein eL20 family. In terms of assembly, part of the 50S ribosomal subunit. Binds 23S rRNA.

This chain is Large ribosomal subunit protein eL20, found in Pyrobaculum islandicum (strain DSM 4184 / JCM 9189 / GEO3).